Here is a 163-residue protein sequence, read N- to C-terminus: Nucleotide-binding protein GWCH70_0711 (163 aa).

This sequence belongs to the YajQ family.

Its function is as follows. Nucleotide-binding protein. The sequence is that of Nucleotide-binding protein GWCH70_0711 from Geobacillus sp. (strain WCH70).